The following is an 873-amino-acid chain: Leucine--tRNA ligase (873 aa).

Residues 42-52 carry the 'HIGH' region motif; that stretch reads PYPSGKLHMGH. The 'KMSKS' region motif lies at 628–632; sequence KMSKS. Lysine 631 is an ATP binding site.

The protein belongs to the class-I aminoacyl-tRNA synthetase family.

The protein localises to the cytoplasm. The catalysed reaction is tRNA(Leu) + L-leucine + ATP = L-leucyl-tRNA(Leu) + AMP + diphosphate. This is Leucine--tRNA ligase from Azoarcus sp. (strain BH72).